The sequence spans 324 residues: Kelch domain-containing protein PF0436 (324 aa).

Kelch repeat units lie at residues 112 to 160 (EVLL…LWDG), 254 to 301 (GIYI…WDGR), and 303 to 323 (IYIV…FTPK).

This is Kelch domain-containing protein PF0436 from Pyrococcus furiosus (strain ATCC 43587 / DSM 3638 / JCM 8422 / Vc1).